We begin with the raw amino-acid sequence, 435 residues long: Glutamyl-tRNA reductase (435 aa).

Residues 49–52 (TCNR), Ser109, 114–116 (ETQ), and Gln120 contribute to the substrate site. Cys50 acts as the Nucleophile in catalysis. Residue 189-194 (GAGEMS) coordinates NADP(+).

The protein belongs to the glutamyl-tRNA reductase family. In terms of assembly, homodimer.

The enzyme catalyses (S)-4-amino-5-oxopentanoate + tRNA(Glu) + NADP(+) = L-glutamyl-tRNA(Glu) + NADPH + H(+). It participates in porphyrin-containing compound metabolism; protoporphyrin-IX biosynthesis; 5-aminolevulinate from L-glutamyl-tRNA(Glu): step 1/2. Its function is as follows. Catalyzes the NADPH-dependent reduction of glutamyl-tRNA(Glu) to glutamate 1-semialdehyde (GSA). The polypeptide is Glutamyl-tRNA reductase (Listeria innocua serovar 6a (strain ATCC BAA-680 / CLIP 11262)).